We begin with the raw amino-acid sequence, 180 residues long: NADH-quinone oxidoreductase subunit I (180 aa).

4Fe-4S ferredoxin-type domains are found at residues 48-80 and 90-119; these read IVLTRDPDGDERCVACNLCAVACPVGCISLQKS and EFFRINFSRCIFCGLCEEACPTTAIQLTPD. Residues Cys60, Cys63, Cys66, Cys70, Cys99, Cys102, Cys105, and Cys109 each coordinate [4Fe-4S] cluster. Over residues 161–174 the composition is skewed to basic and acidic residues; that stretch reads KPKGDAENEAKPID. Positions 161 to 180 are disordered; it reads KPKGDAENEAKPIDVKSLLP.

Belongs to the complex I 23 kDa subunit family. NDH-1 is composed of 14 different subunits. Subunits NuoA, H, J, K, L, M, N constitute the membrane sector of the complex. The cofactor is [4Fe-4S] cluster.

It is found in the cell inner membrane. It catalyses the reaction a quinone + NADH + 5 H(+)(in) = a quinol + NAD(+) + 4 H(+)(out). Functionally, NDH-1 shuttles electrons from NADH, via FMN and iron-sulfur (Fe-S) centers, to quinones in the respiratory chain. The immediate electron acceptor for the enzyme in this species is believed to be ubiquinone. Couples the redox reaction to proton translocation (for every two electrons transferred, four hydrogen ions are translocated across the cytoplasmic membrane), and thus conserves the redox energy in a proton gradient. The chain is NADH-quinone oxidoreductase subunit I from Aeromonas hydrophila subsp. hydrophila (strain ATCC 7966 / DSM 30187 / BCRC 13018 / CCUG 14551 / JCM 1027 / KCTC 2358 / NCIMB 9240 / NCTC 8049).